A 297-amino-acid polypeptide reads, in one-letter code: Ketohexokinase (297 aa).

Beta-D-fructose contacts are provided by D15, G41, N42, and N45. Residues R107, A225 to G228, and G254 to D257 each bind ATP. D257 serves as a coordination point for beta-D-fructose.

It belongs to the carbohydrate kinase PfkB family. As to quaternary structure, homodimer.

It carries out the reaction beta-D-fructose + ATP = beta-D-fructose 1-phosphate + ADP + H(+). It functions in the pathway carbohydrate metabolism; fructose metabolism. With respect to regulation, requires potassium. Inhibition by ADP. Functionally, catalyzes the phosphorylation of the ketose sugar fructose to fructose-1-phosphate. In Pongo abelii (Sumatran orangutan), this protein is Ketohexokinase (KHK).